Here is a 230-residue protein sequence, read N- to C-terminus: Transmembrane protein 221 (230 aa).

Helical transmembrane passes span 12–32 (AMTL…QLLF), 73–93 (ALAA…ALCG), 125–145 (LFCC…LLLF), and 147–167 (IEAG…LVAI). A disordered region spans residues 184–230 (RELSPPSFEDEPARPSEDSKSGCRAQPPQDEETETPIGAVTHQGSHF). Positions 194-204 (EPARPSEDSKS) are enriched in basic and acidic residues.

The protein resides in the membrane. The polypeptide is Transmembrane protein 221 (Tmem221) (Mus musculus (Mouse)).